The sequence spans 191 residues: Calcium-activated potassium channel subunit beta-1 (191 aa).

The Cytoplasmic segment spans residues 1 to 15; sequence MGKKLVMAQKRGETR. A helical membrane pass occupies residues 16-36; that stretch reads ALCLGVAMVMCAVIAYYILGT. At 37–157 the chain is on the extracellular side; sequence TMLPLYQKSV…YRRLYGPQTL (121 aa). Asn80 and Asn142 each carry an N-linked (GlcNAc...) asparagine glycan. Residues 158 to 178 form a helical membrane-spanning segment; the sequence is LFSLFWPTFLLTGGLLIIAMV. Residues 179-191 are Cytoplasmic-facing; sequence KINQSLSILAAQR.

The protein belongs to the KCNMB (TC 8.A.14.1) family. KCNMB1 subfamily. In terms of assembly, interacts with KCNMA1 tetramer. There are probably 4 molecules of KCMNB1 per KCNMA1 tetramer. Post-translationally, N-glycosylated.

The protein localises to the membrane. Its function is as follows. Regulatory subunit of the calcium activated potassium KCNMA1 (maxiK) channel. Modulates the calcium sensitivity and gating kinetics of KCNMA1, thereby contributing to KCNMA1 channel diversity. Increases the apparent Ca(2+)/voltage sensitivity of the KCNMA1 channel. It also modifies KCNMA1 channel kinetics and alters its pharmacological properties. It slows down the activation and the deactivation kinetics of the channel. Acts as a negative regulator of smooth muscle contraction by enhancing the calcium sensitivity to KCNMA1. Its presence is also a requirement for internal binding of the KCNMA1 channel opener dehydrosoyasaponin I (DHS-1) triterpene glycoside and for external binding of the agonist hormone 17-beta-estradiol (E2). Increases the binding activity of charybdotoxin (CTX) toxin to KCNMA1 peptide blocker by increasing the CTX association rate and decreasing the dissociation rate. This is Calcium-activated potassium channel subunit beta-1 (KCNMB1) from Canis lupus familiaris (Dog).